The chain runs to 220 residues: MNGEIITVAVPKGRLLEESSALFERALGVSPKRLLDGTRKLAADAPEAGLRFISIRAADVASYVEHGAAAVGIVGLDILREEPRDLYEPLDLGIGRCQVIVARHKQAKPLPRGVAPRVATKYLSLAAHHFARKGIPAEIIPLHGSIEVAPSLGLADAIVDITETGETLRANGLVIEELVLDVSARLVVNRVALKLHAERLRRLIEALRRVCAETATPKVR.

It belongs to the ATP phosphoribosyltransferase family. Short subfamily. Heteromultimer composed of HisG and HisZ subunits.

It localises to the cytoplasm. It carries out the reaction 1-(5-phospho-beta-D-ribosyl)-ATP + diphosphate = 5-phospho-alpha-D-ribose 1-diphosphate + ATP. It functions in the pathway amino-acid biosynthesis; L-histidine biosynthesis; L-histidine from 5-phospho-alpha-D-ribose 1-diphosphate: step 1/9. In terms of biological role, catalyzes the condensation of ATP and 5-phosphoribose 1-diphosphate to form N'-(5'-phosphoribosyl)-ATP (PR-ATP). Has a crucial role in the pathway because the rate of histidine biosynthesis seems to be controlled primarily by regulation of HisG enzymatic activity. The polypeptide is ATP phosphoribosyltransferase (Anaeromyxobacter sp. (strain Fw109-5)).